The chain runs to 287 residues: Formamidopyrimidine-DNA glycosylase (287 aa).

Catalysis depends on Pro-2, which acts as the Schiff-base intermediate with DNA. Glu-3 functions as the Proton donor in the catalytic mechanism. Lys-61 acts as the Proton donor; for beta-elimination activity in catalysis. DNA is bound by residues His-95, Arg-115, and Arg-157. An FPG-type zinc finger spans residues 243 to 277 (NVYGRADQPCRRCGEPVRREAFMNRSSFSCPRCQP). Catalysis depends on Arg-267, which acts as the Proton donor; for delta-elimination activity.

This sequence belongs to the FPG family. Monomer. It depends on Zn(2+) as a cofactor.

The catalysed reaction is Hydrolysis of DNA containing ring-opened 7-methylguanine residues, releasing 2,6-diamino-4-hydroxy-5-(N-methyl)formamidopyrimidine.. It catalyses the reaction 2'-deoxyribonucleotide-(2'-deoxyribose 5'-phosphate)-2'-deoxyribonucleotide-DNA = a 3'-end 2'-deoxyribonucleotide-(2,3-dehydro-2,3-deoxyribose 5'-phosphate)-DNA + a 5'-end 5'-phospho-2'-deoxyribonucleoside-DNA + H(+). Involved in base excision repair of DNA damaged by oxidation or by mutagenic agents. Acts as a DNA glycosylase that recognizes and removes damaged bases. Has a preference for oxidized purines, such as 7,8-dihydro-8-oxoguanine (8-oxoG). Has AP (apurinic/apyrimidinic) lyase activity and introduces nicks in the DNA strand. Cleaves the DNA backbone by beta-delta elimination to generate a single-strand break at the site of the removed base with both 3'- and 5'-phosphates. In Salinispora tropica (strain ATCC BAA-916 / DSM 44818 / JCM 13857 / NBRC 105044 / CNB-440), this protein is Formamidopyrimidine-DNA glycosylase.